A 270-amino-acid chain; its full sequence is Undecaprenyl-diphosphatase 2 (270 aa).

A run of 8 helical transmembrane segments spans residues 1-21 (MDLI…FLPV), 39-59 (QGLA…VWYF), 87-107 (WAVI…KGFI), 114-134 (PLVI…SDVV), 147-167 (LSWK…IPGT), 190-210 (FSFL…TLDL), 221-241 (AMGL…HFFL), and 247-267 (VGML…LVLF).

Belongs to the UppP family.

The protein localises to the cell inner membrane. It catalyses the reaction di-trans,octa-cis-undecaprenyl diphosphate + H2O = di-trans,octa-cis-undecaprenyl phosphate + phosphate + H(+). In terms of biological role, catalyzes the dephosphorylation of undecaprenyl diphosphate (UPP). Confers resistance to bacitracin. The polypeptide is Undecaprenyl-diphosphatase 2 (Stutzerimonas stutzeri (strain A1501) (Pseudomonas stutzeri)).